We begin with the raw amino-acid sequence, 271 residues long: Protein ABHD14A (271 aa).

Residues 35-55 (VALLGLSLLLMLLLYVGLPGP) traverse the membrane as a helical; Signal-anchor for type II membrane protein segment. N-linked (GlcNAc...) asparagine glycosylation is present at N67. Catalysis depends on S171, which acts as the Charge relay system. Residue N201 is glycosylated (N-linked (GlcNAc...) asparagine). Catalysis depends on charge relay system residues D222 and H249.

Belongs to the AB hydrolase superfamily. ABHD14 family.

The protein resides in the cytoplasm. Its subcellular location is the membrane. Functionally, possible role in granule neuron development. The sequence is that of Protein ABHD14A from Homo sapiens (Human).